Here is a 408-residue protein sequence, read N- to C-terminus: S-adenosylmethionine synthase (408 aa).

ATP is bound at residue histidine 19. Residue aspartate 21 participates in Mg(2+) binding. Glutamate 47 is a K(+) binding site. Glutamate 60 and glutamine 104 together coordinate L-methionine. The interval 104 to 114 (QSPEIASGVDH) is flexible loop. Residues 185–187 (DAK), 255–256 (RF), aspartate 264, 270–271 (RK), alanine 287, and lysine 291 contribute to the ATP site. Aspartate 264 is a binding site for L-methionine. Lysine 295 contributes to the L-methionine binding site.

This sequence belongs to the AdoMet synthase family. As to quaternary structure, homotetramer; dimer of dimers. Mg(2+) is required as a cofactor. K(+) serves as cofactor.

The protein resides in the cytoplasm. It carries out the reaction L-methionine + ATP + H2O = S-adenosyl-L-methionine + phosphate + diphosphate. The protein operates within amino-acid biosynthesis; S-adenosyl-L-methionine biosynthesis; S-adenosyl-L-methionine from L-methionine: step 1/1. Functionally, catalyzes the formation of S-adenosylmethionine (AdoMet) from methionine and ATP. The overall synthetic reaction is composed of two sequential steps, AdoMet formation and the subsequent tripolyphosphate hydrolysis which occurs prior to release of AdoMet from the enzyme. In Deinococcus radiodurans (strain ATCC 13939 / DSM 20539 / JCM 16871 / CCUG 27074 / LMG 4051 / NBRC 15346 / NCIMB 9279 / VKM B-1422 / R1), this protein is S-adenosylmethionine synthase.